The following is a 95-amino-acid chain: Integration host factor subunit beta (95 aa).

This sequence belongs to the bacterial histone-like protein family. As to quaternary structure, heterodimer of an alpha and a beta chain.

In terms of biological role, this protein is one of the two subunits of integration host factor, a specific DNA-binding protein that functions in genetic recombination as well as in transcriptional and translational control. The chain is Integration host factor subunit beta from Colwellia psychrerythraea (strain 34H / ATCC BAA-681) (Vibrio psychroerythus).